We begin with the raw amino-acid sequence, 383 residues long: 6-hydroxynicotinate 3-monooxygenase (383 aa).

A signal peptide spans 1-26 (MQGKPRIAVIGAGLGGTAGAALMARA). FAD is bound by residues Gly-15, 34–35 (EQ), His-47, Arg-108, and Leu-130. His-47 functions as the Proton acceptor in the catalytic mechanism. Tyr-214 serves as the catalytic Proton acceptor. FAD contacts are provided by residues Asp-293 and 306-307 (AA).

This sequence belongs to the 6-hydroxynicotinate 3-monooxygenase family. Monomer. FAD serves as cofactor.

It catalyses the reaction 6-hydroxynicotinate + NADH + O2 + 2 H(+) = 2,5-dihydroxypyridine + CO2 + NAD(+) + H2O. It functions in the pathway cofactor degradation; nicotinate degradation. Competitively inhibited by 6-hydroxynicotinaldehyde. Flavin-dependent monooxygenase (FMO) that catalyzes the decarboxylative hydroxylation of 6-hydroxynicotinic acid (6-HNA) to 2,5-dihydroxypyridine (2,5-DHP) with concomitant oxidation of NADH, a step in the aerobic nicotinate degradation pathway. Is also active on the non-natural substrate 5-chloro-6-hydroxynicotinate, and is much less efficient on the substrate analog 4-hydroxybenzoate. This is 6-hydroxynicotinate 3-monooxygenase from Bordetella bronchiseptica (strain ATCC BAA-588 / NCTC 13252 / RB50) (Alcaligenes bronchisepticus).